The sequence spans 198 residues: FMN-dependent NADH:quinone oxidoreductase (198 aa).

Residues serine 10, serine 16 to serine 18, methionine 94 to phenylalanine 97, and threonine 138 to glycine 141 contribute to the FMN site.

This sequence belongs to the azoreductase type 1 family. In terms of assembly, homodimer. The cofactor is FMN.

It carries out the reaction 2 a quinone + NADH + H(+) = 2 a 1,4-benzosemiquinone + NAD(+). It catalyses the reaction N,N-dimethyl-1,4-phenylenediamine + anthranilate + 2 NAD(+) = 2-(4-dimethylaminophenyl)diazenylbenzoate + 2 NADH + 2 H(+). In terms of biological role, quinone reductase that provides resistance to thiol-specific stress caused by electrophilic quinones. Functionally, also exhibits azoreductase activity. Catalyzes the reductive cleavage of the azo bond in aromatic azo compounds to the corresponding amines. The chain is FMN-dependent NADH:quinone oxidoreductase from Shewanella oneidensis (strain ATCC 700550 / JCM 31522 / CIP 106686 / LMG 19005 / NCIMB 14063 / MR-1).